The primary structure comprises 399 residues: MGRAKKVVLAYSGGVDTSVCIPYLKHEWGVEEVITLAADLGQGDELEPIRKKALDAGAAQSLIADGTESFIADYAFPAIQANALYENRYPLSTALARPLIAKLLVEAAEIHGADAVAHGCTGKGNDQVRFDVSITALNPDIKVLAPAREWGMSREETIAYGEKYGVQSPVKKSSPYSIDRNLLGRSVEAGPLEDPWVEPLEEVYDLTKAIADTPDQPEYVDIDFAQGLPTQLNGQALSPVALVEQLNQIVGNHGVGRIDMVENRLVGIKSREIYEAPALLVLIQAHRELESLALTADVTHYKRGIEETYSQLVYNGLWFSPLKDALDAFIQQTQKQVTGTVRVKLFKGAATVVGRQSPHSLYTPDLATYGAEDAFDHKAAEGFIYVWGLPTRVWSQQQR.

ATP contacts are provided by residues 10–18 and Ala-38; that span reads AYSGGVDTS. Tyr-89 contributes to the L-citrulline binding site. Gly-119 is a binding site for ATP. L-aspartate contacts are provided by Thr-121, Asn-125, and Asp-126. Residue Asn-125 participates in L-citrulline binding. Arg-129, Ser-177, Ser-186, Glu-262, and Tyr-274 together coordinate L-citrulline.

It belongs to the argininosuccinate synthase family. Type 1 subfamily. Homotetramer.

The protein localises to the cytoplasm. The enzyme catalyses L-citrulline + L-aspartate + ATP = 2-(N(omega)-L-arginino)succinate + AMP + diphosphate + H(+). It functions in the pathway amino-acid biosynthesis; L-arginine biosynthesis; L-arginine from L-ornithine and carbamoyl phosphate: step 2/3. The sequence is that of Argininosuccinate synthase from Acaryochloris marina (strain MBIC 11017).